The primary structure comprises 326 residues: Small ribosomal subunit biogenesis GTPase RsgA (326 aa).

One can recognise a CP-type G domain in the interval 80-241 (LSHQMHIIAS…IIDTPGIKGF (162 aa)). Residues 129-132 (NKID) and 183-191 (GHSGVGKST) each bind GTP. Zn(2+)-binding residues include cysteine 265, cysteine 270, histidine 272, and cysteine 278.

The protein belongs to the TRAFAC class YlqF/YawG GTPase family. RsgA subfamily. As to quaternary structure, monomer. Associates with 30S ribosomal subunit, binds 16S rRNA. The cofactor is Zn(2+).

Its subcellular location is the cytoplasm. Functionally, one of several proteins that assist in the late maturation steps of the functional core of the 30S ribosomal subunit. Helps release RbfA from mature subunits. May play a role in the assembly of ribosomal proteins into the subunit. Circularly permuted GTPase that catalyzes slow GTP hydrolysis, GTPase activity is stimulated by the 30S ribosomal subunit. This Flavobacterium psychrophilum (strain ATCC 49511 / DSM 21280 / CIP 103535 / JIP02/86) protein is Small ribosomal subunit biogenesis GTPase RsgA.